A 434-amino-acid chain; its full sequence is DNA primase large subunit PriL (434 aa).

4 residues coordinate [4Fe-4S] cluster: C281, C392, C403, and C409.

This sequence belongs to the eukaryotic-type primase large subunit family. As to quaternary structure, heterodimer of a small subunit (PriS) and a large subunit (PriL). [4Fe-4S] cluster is required as a cofactor.

Functionally, regulatory subunit of DNA primase, an RNA polymerase that catalyzes the synthesis of short RNA molecules used as primers for DNA polymerase during DNA replication. Stabilizes and modulates the activity of the small subunit, increasing the rate of DNA synthesis, and conferring RNA synthesis capability. The DNA polymerase activity may enable DNA primase to also catalyze primer extension after primer synthesis. May also play a role in DNA repair. The protein is DNA primase large subunit PriL of Methanothermobacter thermautotrophicus (strain ATCC 29096 / DSM 1053 / JCM 10044 / NBRC 100330 / Delta H) (Methanobacterium thermoautotrophicum).